We begin with the raw amino-acid sequence, 217 residues long: Protein TNT (217 aa).

A disordered region spans residues 1–217 (MSLVPGQHCS…HSTKQTGGKE (217 aa)). Polar residues-rich tracts occupy residues 20–36 (SPITMGTEPATQNTEFS) and 45–61 (TSPQRGHSQHSEASQGP). Low complexity-rich tracts occupy residues 91 to 104 (EPSLQSPSLELQSP) and 128 to 139 (QSSESHVSSVQH). 2 stretches are compositionally biased toward polar residues: residues 177 to 191 (RLNTQAASNQTSQLG) and 207 to 217 (AHSTKQTGGKE).

As to expression, preferentially expressed in teratocarcinoma rather than in normal testis.

The sequence is that of Protein TNT (C16orf82) from Homo sapiens (Human).